A 429-amino-acid chain; its full sequence is Argininosuccinate lyase (429 aa).

This sequence belongs to the lyase 1 family. Argininosuccinate lyase subfamily.

It is found in the cytoplasm. It catalyses the reaction 2-(N(omega)-L-arginino)succinate = fumarate + L-arginine. It participates in amino-acid biosynthesis; L-arginine biosynthesis; L-arginine from L-ornithine and carbamoyl phosphate: step 3/3. The protein is Argininosuccinate lyase of Pyrobaculum arsenaticum (strain DSM 13514 / JCM 11321 / PZ6).